The following is a 252-amino-acid chain: Hydroxyacylglutathione hydrolase (252 aa).

The Zn(2+) site is built by H54, H56, D58, H59, H113, D132, and H170.

It belongs to the metallo-beta-lactamase superfamily. Glyoxalase II family. In terms of assembly, monomer. Zn(2+) serves as cofactor.

It catalyses the reaction an S-(2-hydroxyacyl)glutathione + H2O = a 2-hydroxy carboxylate + glutathione + H(+). It functions in the pathway secondary metabolite metabolism; methylglyoxal degradation; (R)-lactate from methylglyoxal: step 2/2. Thiolesterase that catalyzes the hydrolysis of S-D-lactoyl-glutathione to form glutathione and D-lactic acid. In Synechococcus sp. (strain JA-2-3B'a(2-13)) (Cyanobacteria bacterium Yellowstone B-Prime), this protein is Hydroxyacylglutathione hydrolase.